The following is a 106-amino-acid chain: HIG1 domain family member 2B (106 aa).

At 1–46 (MATLGFVTPEAPFESSKPPIFEGLSPTVYSNPEGFKEKFLRKTREN) the chain is on the cytoplasmic side. Positions 20–106 (IFEGLSPTVY…LAATAMKSPP (87 aa)) constitute an HIG1 domain. Residues 47 to 67 (PVVPIGFLCTAAVLTNGLYCF) form a helical membrane-spanning segment. The Extracellular portion of the chain corresponds to 68-81 (HQGNSQCSRLMMHT). Residues 82–102 (QIAAQGFTIAAILLGLAATAM) form a helical membrane-spanning segment. Residues 103–106 (KSPP) lie on the Cytoplasmic side of the membrane.

The protein resides in the membrane. The protein is HIG1 domain family member 2B (HIGD2B) of Homo sapiens (Human).